Here is an 814-residue protein sequence, read N- to C-terminus: Putative serine/threonine-protein kinase-like protein CCR3 (814 aa).

The first 30 residues, 1 to 30 (MKRFINSTVTFSVTVTIAVIIFFLLSPVTS), serve as a signal peptide directing secretion. N6, N68, N136, N215, N226, N251, N260, N275, N299, and N309 each carry an N-linked (GlcNAc...) asparagine glycan. Over 31-393 (LGSGSTYAVV…SSPPSKALTR (363 aa)) the chain is Extracellular. Residues 366–381 (SQFPLPPPPPPPPPSP) are compositionally biased toward pro residues. The interval 366-388 (SQFPLPPPPPPPPPSPSTSSPPS) is disordered. The helical transmembrane segment at 394–414 (GLLAFAIVGSVGAFAGICSVV) threads the bilayer. Residues 415–814 (YCLWTGVCLG…SSGICSIVSD (400 aa)) are Cytoplasmic-facing. A disordered region spans residues 433 to 478 (QPTITRGGSNSRSNSSNSRSLSIRRQGSRMLSMRRQRSGTSSMKHA). The segment covering 441 to 457 (SNSRSNSSNSRSLSIRR) has biased composition (low complexity). Positions 496-794 (FSLENKIGSG…DIVGNLERAL (299 aa)) constitute a Protein kinase domain. ATP-binding positions include 502 to 510 (IGSGSFGVV) and K524. D631 functions as the Proton acceptor in the catalytic mechanism.

The protein belongs to the protein kinase superfamily. Ser/Thr protein kinase family. In terms of assembly, homodimer. Expressed in roots, leaves, shoot apical meristems (SAM), and floral buds.

Its subcellular location is the membrane. The enzyme catalyses L-seryl-[protein] + ATP = O-phospho-L-seryl-[protein] + ADP + H(+). It carries out the reaction L-threonyl-[protein] + ATP = O-phospho-L-threonyl-[protein] + ADP + H(+). Its function is as follows. Serine/threonine-protein kinase. This chain is Putative serine/threonine-protein kinase-like protein CCR3 (CCR3), found in Arabidopsis thaliana (Mouse-ear cress).